Here is a 478-residue protein sequence, read N- to C-terminus: Glycogen synthase (478 aa).

ADP-alpha-D-glucose is bound at residue lysine 15.

This sequence belongs to the glycosyltransferase 1 family. Bacterial/plant glycogen synthase subfamily.

The enzyme catalyses [(1-&gt;4)-alpha-D-glucosyl](n) + ADP-alpha-D-glucose = [(1-&gt;4)-alpha-D-glucosyl](n+1) + ADP + H(+). Its pathway is glycan biosynthesis; glycogen biosynthesis. In terms of biological role, synthesizes alpha-1,4-glucan chains using ADP-glucose. The protein is Glycogen synthase of Enterobacter sp. (strain 638).